The primary structure comprises 576 residues: Hemagglutinin-neuraminidase (576 aa).

Basic and acidic residues predominate over residues 1–10 (MDGDRGKRDS). A disordered region spans residues 1–24 (MDGDRGKRDSYWSTSPSGSTTKLA). Residues 1 to 37 (MDGDRGKRDSYWSTSPSGSTTKLASGWERSSKVDTWL) lie on the Intravirion side of the membrane. Residues 10 to 14 (SYWST) form an incorporation in virion region. Residues 11–23 (YWSTSPSGSTTKL) are compositionally biased toward polar residues. A helical membrane pass occupies residues 38-58 (LILSFTQWALSIATVIICIII). The segment at 59–140 (SARQGYSTKE…RQELTQLCES (82 aa)) is involved in interaction with F protein. Residues 59 to 576 (SARQGYSTKE…SIPKLCKAES (518 aa)) lie on the Virion surface side of the membrane. The N-linked (GlcNAc...) asparagine; by host glycan is linked to N77. 4 disulfide bridges follow: C192–C216, C258–C271, C357–C469, and C463–C473. The interval 254–259 (NRKSCS) is involved in neuraminidase activity. N499 and N511 each carry an N-linked (GlcNAc...) asparagine; by host glycan. Cysteines 536 and 545 form a disulfide.

Belongs to the paramyxoviruses hemagglutinin-neuraminidase family. In terms of assembly, homotetramer; composed of disulfide-linked homodimers. Interacts with F protein trimer. N-glycosylated; glycans consist of a mixture of high mannose-type oligosaccharides and of complex-type oligosaccharides.

It localises to the virion membrane. It is found in the host cell membrane. It catalyses the reaction Hydrolysis of alpha-(2-&gt;3)-, alpha-(2-&gt;6)-, alpha-(2-&gt;8)- glycosidic linkages of terminal sialic acid residues in oligosaccharides, glycoproteins, glycolipids, colominic acid and synthetic substrates.. Its function is as follows. Attaches the virus to sialic acid-containing cell receptors and thereby initiating infection. Binding of HN protein to the receptor induces a conformational change that allows the F protein to trigger virion/cell membranes fusion. Neuraminidase activity ensures the efficient spread of the virus by dissociating the mature virions from the neuraminic acid containing glycoproteins. This is Hemagglutinin-neuraminidase (HN) from Sendai virus (strain Harris) (SeV).